The primary structure comprises 250 residues: Bacteriorhodopsin (250 aa).

The Extracellular segment spans residues 1-18 (MCCAALAPPMAATVGPES). The helical transmembrane segment at 19–37 (IWLWIGTIGMTLGTLYFVG) threads the bilayer. Topologically, residues 38 to 51 (RGRGVRDRKMQEFY) are cytoplasmic. The chain crosses the membrane as a helical span at residues 52–70 (IITIFITTIAAAMYFAMAT). Residues 71-86 (GFGVTEVMVGDEALTI) are Extracellular-facing. Residues 87–104 (YWARYADWLFTTPLLLLD) form a helical membrane-spanning segment. Residues 105–115 (LSLLAGANRNT) lie on the Cytoplasmic side of the membrane. Residues 116–135 (IATLIGLDVFMIGTGAIAAL) traverse the membrane as a helical segment. Over 136–142 (SSTPGTR) the chain is Extracellular. The helical transmembrane segment at 143 to 162 (IAWWAISTGALLALLYVLVG) threads the bilayer. Over 163 to 180 (TLSENARNRAPEVASLFG) the chain is Cytoplasmic. The chain crosses the membrane as a helical span at residues 181–199 (RLRNLVIALWFLYPVVWIL). Topologically, residues 200–212 (GTEGTFGILPLYW) are extracellular. A helical transmembrane segment spans residues 213-232 (ETAAFMVLDLSAKVGFGVIL). Position 225 is an N6-(retinylidene)lysine (K225). The Cytoplasmic portion of the chain corresponds to 233–250 (LQSRSVLERVATPTAAPT).

It belongs to the archaeal/bacterial/fungal opsin family.

The protein resides in the cell membrane. Light-driven proton pump. This is Bacteriorhodopsin (bop) from Haloterrigena sp. (strain arg-4).